Here is a 576-residue protein sequence, read N- to C-terminus: Calcium-dependent protein kinase 11 (576 aa).

Glycine 2 carries the N-myristoyl glycine lipid modification. Residues 27–88 (PADAAPPALP…ANKAAPKVKR (62 aa)) form a disordered region. The segment covering 41–56 (APSDQAPEPVTIPPSE) has biased composition (low complexity). Positions 113–371 (YTIGKKLGQG…AHEALCHPWV (259 aa)) constitute a Protein kinase domain. Residues 119-127 (LGQGQFGTT) and lysine 142 each bind ATP. The active-site Proton acceptor is aspartate 237. The tract at residues 377-407 (APDKPLDSAVLSRLKQFSAMNKLKKMALRVI) is autoinhibitory domain. EF-hand domains follow at residues 414–449 (EEIA…VGAN), 450–485 (LMDS…INKV), 486–521 (EKED…FGIG), and 522–555 (DTRI…GNNA). Residues aspartate 427, aspartate 429, serine 431, histidine 433, glutamate 438, aspartate 463, aspartate 465, serine 467, threonine 469, glutamate 474, aspartate 499, aspartate 501, serine 503, tyrosine 505, glutamate 510, aspartate 533, aspartate 535, aspartate 537, arginine 539, and glutamate 544 each contribute to the Ca(2+) site.

It belongs to the protein kinase superfamily. Ser/Thr protein kinase family. CDPK subfamily.

It is found in the membrane. The catalysed reaction is L-seryl-[protein] + ATP = O-phospho-L-seryl-[protein] + ADP + H(+). It carries out the reaction L-threonyl-[protein] + ATP = O-phospho-L-threonyl-[protein] + ADP + H(+). Its activity is regulated as follows. Activated by calcium. Autophosphorylation may play an important role in the regulation of the kinase activity. Functionally, may play a role in signal transduction pathways that involve calcium as a second messenger. In Oryza sativa subsp. japonica (Rice), this protein is Calcium-dependent protein kinase 11.